A 120-amino-acid chain; its full sequence is uncharacterized protein (120 aa).

The protein belongs to the HesB/IscA family.

This is an uncharacterized protein from Bacillus subtilis (strain 168).